We begin with the raw amino-acid sequence, 223 residues long: Putative NAD(P)H nitroreductase SAB2397c (223 aa).

It belongs to the nitroreductase family. It depends on FMN as a cofactor.

This Staphylococcus aureus (strain bovine RF122 / ET3-1) protein is Putative NAD(P)H nitroreductase SAB2397c.